The following is a 507-amino-acid chain: Transposase for insertion sequences IS1326/IS1353 (507 aa).

In terms of domain architecture, HTH IS21-type spans 6–68 (ILSAIRRWHF…PFEPKLRQWL (63 aa)). The H-T-H motif DNA-binding region spans 19–40 (ASIREIARRSGLSRNTVRKYLQ). The region spanning 122-302 (GCFIPLRFAC…TVQEAFADEQ (181 aa)) is the Integrase catalytic domain.

Belongs to the transposase IS21/IS408/IS1162 family.

Its function is as follows. Required for the transposition of the insertion element. This Pseudomonas aeruginosa protein is Transposase for insertion sequences IS1326/IS1353 (istA).